Here is a 1502-residue protein sequence, read N- to C-terminus: Ras guanine nucleotide exchange factor P (1502 aa).

Residues 84–187 (FIIDNQVLDW…LLYSLMKFSE (104 aa)) form the Calponin-homology (CH) domain. Disordered stretches follow at residues 216–242 (AQSS…SSNE), 325–436 (QQQQ…PNNN), 456–534 (EDNT…VGRG), and 589–935 (TTTA…NQNN). 4 stretches are compositionally biased toward low complexity: residues 218 to 242 (SSSS…SSNE), 325 to 345 (QQQQ…TTTT), 371 to 400 (TTSS…LLNH), and 407 to 421 (SSST…PIST). A coiled-coil region spans residues 287–328 (QQQQQQQQQQQQQQQQQQQQQQQQQQQQQQQQQQQQQQQQQQ). Over residues 422–436 (PSTSKSNSFQKPNNN) the composition is skewed to polar residues. Residues 451–515 (EENEIEDNTN…NQNENEDEVK (65 aa)) adopt a coiled-coil conformation. Positions 458–508 (NTNNNNNNNNNNNNNNNNNNNNNNNNNNNNNNNNTNDNINNNNKNNNNNQN) are enriched in low complexity. The segment covering 518–528 (HSPPKVRPPLP) has biased composition (pro residues). Low complexity-rich tracts occupy residues 589–646 (TTTA…NNNN), 663–675 (TIST…TGTI), 686–719 (SQPL…LSLP), 764–790 (NSIN…VSQS), and 813–853 (NSNS…NNNN). Residues 861–876 (LTMSNQSANSLKSSGN) show a composition bias toward polar residues. Residues 883-935 (TNGNNNISQNQNQNQNQNQNQTQNQNQNQNQNHISHSNSISSGNLNNHVNQNN) show a composition bias toward low complexity. The stretch at 1032–1076 (VEENKNLITRTEEMQKMIDSLMKEKKELINEKNTLASMLAKTKQQ) forms a coiled coil. An N-terminal Ras-GEF domain is found at 1102-1249 (GKYEIKGGTT…SELKLVFSTP (148 aa)). Residues 1267–1498 (DPAEIARQLT…FNLSLICEPR (232 aa)) enclose the Ras-GEF domain.

In terms of biological role, promotes the exchange of Ras-bound GDP by GTP. In Dictyostelium discoideum (Social amoeba), this protein is Ras guanine nucleotide exchange factor P (gefP).